The following is a 205-amino-acid chain: Thiamine-phosphate synthase (205 aa).

4-amino-2-methyl-5-(diphosphooxymethyl)pyrimidine-binding positions include 35–39 and asparagine 67; that span reads QYRDK. Mg(2+)-binding residues include aspartate 68 and aspartate 86. Threonine 105 serves as a coordination point for 4-amino-2-methyl-5-(diphosphooxymethyl)pyrimidine. 132-134 contacts 2-[(2R,5Z)-2-carboxy-4-methylthiazol-5(2H)-ylidene]ethyl phosphate; that stretch reads SLT. 4-amino-2-methyl-5-(diphosphooxymethyl)pyrimidine is bound at residue lysine 135. Glycine 162 provides a ligand contact to 2-[(2R,5Z)-2-carboxy-4-methylthiazol-5(2H)-ylidene]ethyl phosphate.

The protein belongs to the thiamine-phosphate synthase family. It depends on Mg(2+) as a cofactor.

The enzyme catalyses 2-[(2R,5Z)-2-carboxy-4-methylthiazol-5(2H)-ylidene]ethyl phosphate + 4-amino-2-methyl-5-(diphosphooxymethyl)pyrimidine + 2 H(+) = thiamine phosphate + CO2 + diphosphate. The catalysed reaction is 2-(2-carboxy-4-methylthiazol-5-yl)ethyl phosphate + 4-amino-2-methyl-5-(diphosphooxymethyl)pyrimidine + 2 H(+) = thiamine phosphate + CO2 + diphosphate. It carries out the reaction 4-methyl-5-(2-phosphooxyethyl)-thiazole + 4-amino-2-methyl-5-(diphosphooxymethyl)pyrimidine + H(+) = thiamine phosphate + diphosphate. It functions in the pathway cofactor biosynthesis; thiamine diphosphate biosynthesis; thiamine phosphate from 4-amino-2-methyl-5-diphosphomethylpyrimidine and 4-methyl-5-(2-phosphoethyl)-thiazole: step 1/1. Condenses 4-methyl-5-(beta-hydroxyethyl)thiazole monophosphate (THZ-P) and 2-methyl-4-amino-5-hydroxymethyl pyrimidine pyrophosphate (HMP-PP) to form thiamine monophosphate (TMP). This is Thiamine-phosphate synthase from Pseudomonas savastanoi pv. phaseolicola (strain 1448A / Race 6) (Pseudomonas syringae pv. phaseolicola (strain 1448A / Race 6)).